The following is a 790-amino-acid chain: Pleckstrin homology domain-containing family G member 6 (790 aa).

The interval 63–91 (SGQARGLSPMRLRDPEPEKRHGGHVGAGL) is disordered. A compositionally biased stretch (basic and acidic residues) spans 73 to 82 (RLRDPEPEKR). The DH domain occupies 161-353 (HQQEALWELL…ESFLRHINGQ (193 aa)). One can recognise a PH domain in the interval 409–509 (QLLLEGPVRV…WLEKTQQAQA (101 aa)). 2 stretches are compositionally biased toward basic and acidic residues: residues 529-538 (LYRDQDRESP) and 625-635 (ELRDIPLRPHP). Disordered stretches follow at residues 529 to 677 (LYRD…ASER), 690 to 730 (LRGQ…HTSL), and 748 to 790 (SQRI…ASEV). Residues 748-762 (SQRIEGAEEPRDSRP) show a composition bias toward basic and acidic residues.

Interacts with MYH10. Interacts with ELMO1 and EZR (in an open conformation). Interacts with CSPP1. As to expression, highest expression in the placenta. Low levels in small intestine, lung, liver, kidney, thymus and heart.

The protein resides in the cell projection. Its subcellular location is the microvillus. It localises to the cytoplasm. It is found in the cytoskeleton. The protein localises to the spindle. The protein resides in the spindle pole. Its subcellular location is the cleavage furrow. In terms of biological role, guanine nucleotide exchange factor activating the small GTPase RHOA, which, in turn, induces myosin filament formation. Also activates RHOG. Does not activate RAC1, or to a much lower extent than RHOA and RHOG. Part of a functional unit, involving PLEKHG6, MYH10 and RHOA, at the cleavage furrow to advance furrow ingression during cytokinesis. In epithelial cells, required for the formation of microvilli and membrane ruffles on the apical pole. Along with EZR, required for normal macropinocytosis. This is Pleckstrin homology domain-containing family G member 6 (PLEKHG6) from Homo sapiens (Human).